Reading from the N-terminus, the 365-residue chain is Ubiquitin carboxyl-terminal hydrolase 4 (365 aa).

The N-myristoyl glycine moiety is linked to residue glycine 2. The USP domain occupies 23-362 (FGFENFGNTC…HGYILLYESL (340 aa)). Cysteine 32 serves as the catalytic Nucleophile. The short motif at 81–98 (KKKTGVIAPKRFVQRLKK) is the Bipartite nuclear localization signal element. Histidine 310 (proton acceptor) is an active-site residue.

The protein belongs to the peptidase C19 family. In terms of tissue distribution, constitutively and ubiquitously expressed.

The protein resides in the nucleus. It catalyses the reaction Thiol-dependent hydrolysis of ester, thioester, amide, peptide and isopeptide bonds formed by the C-terminal Gly of ubiquitin (a 76-residue protein attached to proteins as an intracellular targeting signal).. Recognizes and hydrolyzes the peptide bond at the C-terminal Gly of ubiquitin. Involved in the processing of poly-ubiquitin precursors as well as that of ubiquitinated proteins. Required for the correct development of pollen. The sequence is that of Ubiquitin carboxyl-terminal hydrolase 4 (UBP4) from Arabidopsis thaliana (Mouse-ear cress).